We begin with the raw amino-acid sequence, 440 residues long: Thymidine phosphorylase (440 aa).

The protein belongs to the thymidine/pyrimidine-nucleoside phosphorylase family. In terms of assembly, homodimer.

It carries out the reaction thymidine + phosphate = 2-deoxy-alpha-D-ribose 1-phosphate + thymine. It functions in the pathway pyrimidine metabolism; dTMP biosynthesis via salvage pathway; dTMP from thymine: step 1/2. Its function is as follows. The enzymes which catalyze the reversible phosphorolysis of pyrimidine nucleosides are involved in the degradation of these compounds and in their utilization as carbon and energy sources, or in the rescue of pyrimidine bases for nucleotide synthesis. This chain is Thymidine phosphorylase, found in Klebsiella pneumoniae (strain 342).